Reading from the N-terminus, the 760-residue chain is MFFNFKKYFLIKVFFFVLILTLCYGLYLYVKINRFINGKVWNFPTSIYGRIVNLEPGNSYSQKEVLHLLKSTMYRKVDLVMLPGEYSIKNNTIEFIRRAFDFPDIREDEFHARLYFNKDTLVKIKNIDNNHDFSFFRLEPKLIAMLKSPEAKKRMFIPRNQYPEMLVKTLLAIEDKYFYEHDGIHLSSIGRAFLVNLMAGRTIQGGSTLTQQLIKNLFLTNTRSILRKINEIYMALILDRFYTKDRILELYLNEVYLGQDGDEQIRGFPLASIYYFGRPINELNLEQYALLVGMVKGASLYSPWTNPNLALKRRNLVLFLLYKQKYITRKIYKDLCKRSLNVQPKGNIISSHPSFIQLVCEEFHKKIYNPIKNFPGTKIFTTLDYTSQNAVEQAVKIEIPILKRKKRLKDLEVAMIVIDRFTGEVQALIGSSKPEFNGYNRALKTRRSIGSLSKPITYLTALSQPEKYHLNTWISNYPLSIKLDSGQYWTPKNNNFSFSKKVLLLDALIHSINIPTVNLSINIGLKKLVDSWLLLGISKKYITPLPSISLGAINLTPFEIAQVFQIIGSGGYKSSLSSVRSIISDDGKVLYQNLPQSIHIESSEASYLTLYGMQQVVKSGTAKSLGTIFKEFSLAGKTGTTNNLVDNWFVGIDGKQIVITWIGRDNNHTTRLYSSSGAMQIYKRYLQYQRPVPLVLKAPNNINMFYINNLGELFCKKNNQHNRMLPIWSIKNKKICNDKLSERFSIKKKKNFLFWLKNLF.

Residues 1-8 (MFFNFKKY) lie on the Cytoplasmic side of the membrane. The chain crosses the membrane as a helical; Signal-anchor for type II membrane protein span at residues 9-29 (FLIKVFFFVLILTLCYGLYLY). Over 30-760 (VKINRFINGK…NFLFWLKNLF (731 aa)) the chain is Extracellular. Positions 136 to 308 (FRLEPKLIAM…SLYSPWTNPN (173 aa)) are transglycosylase. Catalysis depends on E174, which acts as the Proton donor; for transglycosylase activity. Residues 392–684 (EQAVKIEIPI…SSGAMQIYKR (293 aa)) form a transpeptidase region. S451 (acyl-ester intermediate; for transpeptidase activity) is an active-site residue.

This sequence in the N-terminal section; belongs to the glycosyltransferase 51 family. In the C-terminal section; belongs to the transpeptidase family.

The protein resides in the cell membrane. The enzyme catalyses [GlcNAc-(1-&gt;4)-Mur2Ac(oyl-L-Ala-gamma-D-Glu-L-Lys-D-Ala-D-Ala)](n)-di-trans,octa-cis-undecaprenyl diphosphate + beta-D-GlcNAc-(1-&gt;4)-Mur2Ac(oyl-L-Ala-gamma-D-Glu-L-Lys-D-Ala-D-Ala)-di-trans,octa-cis-undecaprenyl diphosphate = [GlcNAc-(1-&gt;4)-Mur2Ac(oyl-L-Ala-gamma-D-Glu-L-Lys-D-Ala-D-Ala)](n+1)-di-trans,octa-cis-undecaprenyl diphosphate + di-trans,octa-cis-undecaprenyl diphosphate + H(+). The catalysed reaction is Preferential cleavage: (Ac)2-L-Lys-D-Ala-|-D-Ala. Also transpeptidation of peptidyl-alanyl moieties that are N-acyl substituents of D-alanine.. It functions in the pathway cell wall biogenesis; peptidoglycan biosynthesis. Its function is as follows. Cell wall formation. Synthesis of cross-linked peptidoglycan from the lipid intermediates. The enzyme has a penicillin-insensitive transglycosylase N-terminal domain (formation of linear glycan strands) and a penicillin-sensitive transpeptidase C-terminal domain (cross-linking of the peptide subunits). The polypeptide is Penicillin-binding protein 1B (mrcB) (Buchnera aphidicola subsp. Acyrthosiphon pisum (strain APS) (Acyrthosiphon pisum symbiotic bacterium)).